The primary structure comprises 332 residues: Zinc finger protein CONSTANS-LIKE 13 (332 aa).

Zn(2+)-binding residues include Cys-13, Cys-16, Cys-36, His-41, Cys-56, Cys-59, Cys-79, and His-84. The B box-type 1; atypical zinc-finger motif lies at 13–55 (CDYCDSSVALVYCKADSAKLCLACDKQVHVANQLFAKHFRSLL). Residues 56 to 96 (CDSCNESPSSLFCETERSVLCQNCDWQHHTASSSLHSRRPF) form a B box-type 2; atypical zinc finger. The region spanning 287-329 (RNSALSRYKEKKKSRRYEKHIRYESRKVRAESRTRIRGRFAKA) is the CCT domain.

It belongs to the CONSTANS family.

The protein localises to the nucleus. In Arabidopsis thaliana (Mouse-ear cress), this protein is Zinc finger protein CONSTANS-LIKE 13 (COL13).